A 109-amino-acid chain; its full sequence is Nucleoid-associated protein CGSHiEE_00780 (109 aa).

This sequence belongs to the YbaB/EbfC family. In terms of assembly, homodimer.

The protein resides in the cytoplasm. The protein localises to the nucleoid. Binds to DNA and alters its conformation. May be involved in regulation of gene expression, nucleoid organization and DNA protection. The polypeptide is Nucleoid-associated protein CGSHiEE_00780 (Haemophilus influenzae (strain PittEE)).